The sequence spans 807 residues: Probable E3 ubiquitin-protein ligase mug30 (807 aa).

The 355-residue stretch at 453–807 folds into the HECT domain; the sequence is RNKDFRKALK…LLETNGFNIR (355 aa). C775 serves as the catalytic Glycyl thioester intermediate.

The protein localises to the cytoplasm. It is found in the cytoskeleton. The protein resides in the microtubule organizing center. It localises to the spindle pole body. The enzyme catalyses S-ubiquitinyl-[E2 ubiquitin-conjugating enzyme]-L-cysteine + [acceptor protein]-L-lysine = [E2 ubiquitin-conjugating enzyme]-L-cysteine + N(6)-ubiquitinyl-[acceptor protein]-L-lysine.. It functions in the pathway protein modification; protein ubiquitination. Probable E3 ubiquitin-protein ligase. Has a role in meiosis. The polypeptide is Probable E3 ubiquitin-protein ligase mug30 (mug30) (Schizosaccharomyces pombe (strain 972 / ATCC 24843) (Fission yeast)).